The primary structure comprises 498 residues: Glycerol kinase (498 aa).

Thr12 provides a ligand contact to ADP. ATP-binding residues include Thr12, Thr13, and Ser14. Residue Thr12 coordinates sn-glycerol 3-phosphate. Arg16 is a binding site for ADP. The sn-glycerol 3-phosphate site is built by Arg82, Glu83, Tyr134, and Asp244. 5 residues coordinate glycerol: Arg82, Glu83, Tyr134, Asp244, and Gln245. ADP contacts are provided by Thr266 and Gly310. Residues Thr266, Gly310, Gln314, and Gly411 each coordinate ATP. Gly411 and Asn415 together coordinate ADP.

This sequence belongs to the FGGY kinase family.

It carries out the reaction glycerol + ATP = sn-glycerol 3-phosphate + ADP + H(+). The protein operates within polyol metabolism; glycerol degradation via glycerol kinase pathway; sn-glycerol 3-phosphate from glycerol: step 1/1. Its activity is regulated as follows. Inhibited by fructose 1,6-bisphosphate (FBP). In terms of biological role, key enzyme in the regulation of glycerol uptake and metabolism. Catalyzes the phosphorylation of glycerol to yield sn-glycerol 3-phosphate. In Azorhizobium caulinodans (strain ATCC 43989 / DSM 5975 / JCM 20966 / LMG 6465 / NBRC 14845 / NCIMB 13405 / ORS 571), this protein is Glycerol kinase.